The following is a 196-amino-acid chain: Interleukin-18 (196 aa).

The propeptide occupies 1 to 29 (MSCEEIAVCAVRLRENLCLYFEELECDAF).

Belongs to the IL-1 family. As to quaternary structure, forms a ternary complex with ligand-binding receptor subunit IL18R1 and signaling receptor subunit IL18RAP at the plasma membrane. Mature IL18 first binds to IL18R1 forming a low affinity binary complex, which then interacts with IL18RAP to form a high affinity ternary complex that signals inside the cell. Interacts with cargo receptor TMED10; the interaction mediates the translocation from the cytoplasm into the ERGIC (endoplasmic reticulum-Golgi intermediate compartment) and thereby secretion. In terms of processing, the pro-IL-18 precursor is processed by CASP1 or CASP4 to yield the active form.

The protein localises to the cytoplasm. Its subcellular location is the secreted. Functionally, augments natural killer cell activity in spleen cells and stimulates interferon gamma production in T-helper type I cells. Involved in transduction of inflammation downstream of pyroptosis: its mature form is specifically released in the extracellular milieu by passing through the gasdermin-D (GSDMD) pore. The chain is Interleukin-18 (IL18) from Gallus gallus (Chicken).